The chain runs to 120 residues: Large ribosomal subunit protein bL19 (120 aa).

It belongs to the bacterial ribosomal protein bL19 family.

Its function is as follows. This protein is located at the 30S-50S ribosomal subunit interface and may play a role in the structure and function of the aminoacyl-tRNA binding site. The protein is Large ribosomal subunit protein bL19 (rplS) of Nostoc sp. (strain PCC 7120 / SAG 25.82 / UTEX 2576).